The sequence spans 89 residues: Small ribosomal subunit protein uS15 (89 aa).

It belongs to the universal ribosomal protein uS15 family. In terms of assembly, part of the 30S ribosomal subunit. Forms a bridge to the 50S subunit in the 70S ribosome, contacting the 23S rRNA.

In terms of biological role, one of the primary rRNA binding proteins, it binds directly to 16S rRNA where it helps nucleate assembly of the platform of the 30S subunit by binding and bridging several RNA helices of the 16S rRNA. Forms an intersubunit bridge (bridge B4) with the 23S rRNA of the 50S subunit in the ribosome. The polypeptide is Small ribosomal subunit protein uS15 (Pseudomonas entomophila (strain L48)).